The sequence spans 419 residues: Putative competence-damage inducible protein (419 aa).

It belongs to the CinA family.

The protein is Putative competence-damage inducible protein of Lysinibacillus sphaericus (strain C3-41).